A 583-amino-acid polypeptide reads, in one-letter code: Leucine-rich repeat-containing protein 47 (583 aa).

Position 2 is an N-acetylalanine (Ala-2). LRR repeat units lie at residues 76–95, 100–121, 130–152, 154–175, 180–202, 203–225, and 226–246; these read QLHSLVLRRNALGPGLSPEL, ALRVLDLSGNALEALPPGQGLG, QLQSLNLSGNRLRELPADLARCA, RLQSLNLTGNCLDSFPAELFRP, LLSELAAADNCLRELSPDIAHLA, SLKTLDLSNNQLSEIPAELADCP, and KLKEINFRGNKLRDKRLEKMV. The tract at residues 260 to 300 is disordered; sequence VGGRGGGKGKGRAEGSEKEESRRKRRERKQRREGGDGEEQD. Basic and acidic residues predominate over residues 270-281; sequence GRAEGSEKEESR. Ser-315 and Ser-431 each carry phosphoserine. Residues 402–437 adopt a coiled-coil conformation; that stretch reads LGRKEAKAKELVRQLQLEAEEQRKQKKRQSVSGLHR. Position 509 is a phosphotyrosine (Tyr-509). The tract at residues 513 to 544 is disordered; sequence NKEEGSLSDTEADAVSGQLPDPTTNPSAGKDG. Phosphoserine occurs at positions 518 and 520.

The protein is Leucine-rich repeat-containing protein 47 (LRRC47) of Homo sapiens (Human).